A 117-amino-acid polypeptide reads, in one-letter code: Synaptobrevin homolog 1 (117 aa).

Positions 1–30 are disordered; the sequence is MSSSTPFDPYALSEHDEERPQNVQSKSRTA. Residues 1 to 94 lie on the Cytoplasmic side of the membrane; it reads MSSSTPFDPY…MWYKDLKMKM (94 aa). Residues 28–88 form the v-SNARE coiled-coil homology domain; it reads RTAELQAEID…NRVRKAMWYK (61 aa). Residue Lys-63 forms a Glycyl lysine isopeptide (Lys-Gly) (interchain with G-Cter in ubiquitin) linkage. The S-palmitoyl cysteine moiety is linked to residue Cys-95. The helical; Anchor for type IV membrane protein transmembrane segment at 95-111 threads the bilayer; that stretch reads CLALVIIILLVVIIVPI. The Vesicular segment spans residues 112 to 117; it reads AVHFSR.

This sequence belongs to the synaptobrevin family. In terms of processing, palmitoylated by SWF1.

The protein resides in the endomembrane system. In terms of biological role, SNC1 and SNC2 are vesicle-targeting proteins essential for normal secretory traffic between the Golgi and the plasma membrane. They may also be involved in vesicle fusion. This is Synaptobrevin homolog 1 (SNC1) from Saccharomyces cerevisiae (strain ATCC 204508 / S288c) (Baker's yeast).